The primary structure comprises 117 residues: Large ribosomal subunit protein bL17 (117 aa).

This sequence belongs to the bacterial ribosomal protein bL17 family. Part of the 50S ribosomal subunit. Contacts protein L32.

The chain is Large ribosomal subunit protein bL17 from Campylobacter jejuni subsp. doylei (strain ATCC BAA-1458 / RM4099 / 269.97).